A 41-amino-acid chain; its full sequence is Large ribosomal subunit protein bL36 (41 aa).

It belongs to the bacterial ribosomal protein bL36 family.

The sequence is that of Large ribosomal subunit protein bL36 from Sinorhizobium fredii (strain NBRC 101917 / NGR234).